The primary structure comprises 737 residues: SANT and BTB domain regulator of class switch recombination (737 aa).

In terms of domain architecture, SANT spans 21-59 (DMILYPLIGIPQTINWETVARLVPGLTPKECVKRFDELK). The BTB domain occupies 147–255 (MVIHVCDEAK…QCIQYCHKNM (109 aa)). Over residues 555-576 (SEEEEYTTGSEVTEDEVGDEEE) the composition is skewed to acidic residues. Residues 555–618 (SEEEEYTTGS…TLEKSTSRDV (64 aa)) form a disordered region. Basic residues predominate over residues 580 to 595 (KQRKKEKPKKFTKPPK). Residues 604-615 (QKKEKTLEKSTS) show a composition bias toward basic and acidic residues.

The protein belongs to the KIAA1841 family. In terms of assembly, homodimer. Interacts (via the BTB domain) with HDAC1 and NCOR2.

Its function is as follows. Negatively regulates class switch recombination or isotype switching in splenic B-cells. The sequence is that of SANT and BTB domain regulator of class switch recombination from Rattus norvegicus (Rat).